A 788-amino-acid polypeptide reads, in one-letter code: Spastin (788 aa).

The disordered stretch occupies residues 1 to 105 (MVRTKNQSSS…PRSAGGPSSV (105 aa)). Residues 1 to 116 (MVRTKNQSSS…KQNLYVVSFP (116 aa)) are Cytoplasmic-facing. Residues 1 to 227 (MVRTKNQSSS…NRSGSGYSPG (227 aa)) form a required for localization to punctate cytoplasmic foci region. 2 stretches are compositionally biased toward low complexity: residues 8–48 (SSSS…SSHR) and 57–75 (ATNV…SSPD). Positions 117 to 137 (IIFLFNVLRSLIYQLFCIFRY) form an intramembrane region, helical. Over 138–788 (LYGASTKVIY…WSSDYGDITI (651 aa)) the chain is Cytoplasmic. The segment at 227–788 (GPGDPLLAKQ…WSSDYGDITI (562 aa)) is sufficient for interaction with microtubules and microtubule severing. One can recognise an MIT domain in the interval 240 to 315 (HRRAFEYISK…SMARDRLHFL (76 aa)). Residues 330-353 (KEEQKPNPSREQHQKPQKAREAAD) show a composition bias toward basic and acidic residues. The interval 330 to 484 (KEEQKPNPSR…SGSGSGASTP (155 aa)) is disordered. Low complexity predominate over residues 380–400 (LTTPRISATATTPTSSSSLAS). Composition is skewed to polar residues over residues 419 to 433 (NKSQ…SKTS) and 453 to 469 (QFSS…RTPI). Positions 471–485 (NNGASGSGSGASTPV) are required for interaction with microtubules. Residue 553–560 (GPPGNGKT) participates in ATP binding.

This sequence belongs to the AAA ATPase family. Spastin subfamily. In terms of assembly, homohexamer. The homohexamer is stabilized by ATP-binding. The homohexamer may adopt a ring conformation through which microtubules pass prior to being severed. Interacts with microtubules. Interacts with atl; may be involved in microtubule dynamics.

It localises to the membrane. The protein resides in the cytoplasm. The protein localises to the cytoskeleton. It is found in the microtubule organizing center. Its subcellular location is the centrosome. It localises to the chromosome. The protein resides in the lipid droplet. It catalyses the reaction n ATP + n H2O + a microtubule = n ADP + n phosphate + (n+1) alpha/beta tubulin heterodimers.. Its function is as follows. ATP-dependent microtubule severing protein. Stimulates microtubule minus-end depolymerization and poleward microtubule flux in the mitotic spindle. Regulates microtubule stability in the neuromuscular junction synapse. Involved in lipid metabolism by regulating the size and distribution of lipid droplets. Involved in axon regeneration by regulating microtubule severing. The polypeptide is Spastin (Drosophila pseudoobscura pseudoobscura (Fruit fly)).